The following is a 151-amino-acid chain: FUN14 domain-containing protein 1A (151 aa).

The YXXL motif lies at 14-17 (YEVL). The next 3 membrane-spanning stretches (helical) occupy residues 44 to 64 (YSVA…GFLF), 71 to 91 (AATA…GGYI), and 130 to 150 (FVKK…LGLA).

Belongs to the FUN14 family.

The protein localises to the mitochondrion outer membrane. In terms of biological role, acts as an activator of hypoxia-induced mitophagy, an important mechanism for mitochondrial quality control. The polypeptide is FUN14 domain-containing protein 1A (fundc1-a) (Xenopus laevis (African clawed frog)).